The chain runs to 380 residues: MKKKSVWIKADEGGWEEQKDRITTGLESGADCVLVNPGDVEKVRELGNITVAAFARDNKSRADIVVVGKRGEGDGTKPLPQEIPGSFDINAATLLMDKGVTVGGYVVIKDKHYEHFAAEMGKICDYLLVTGTDWKVIPLENLIADLQHQKVKIIFGVKSAEEARLAFQTLEAGADGVLLDSGNPQEIKDTIKAARELESESAELEAAVVTRVEPLGMGDRVCVDTCNLMQRGEGMLIGSQASGMFLVNSESDDSPYVAARPFRVNAGAVHSYIKIGEKTRYLSELRAGDPVTIVDSKGKQREGIVGRVKIESRPLMLIEAKARDRTLTAILQNAETIKLVGKDGTPISVAKLEKGDEVLVRLEEGARHFGKKIEETIIEK.

This sequence belongs to the archaeal-type DHQ synthase family.

It carries out the reaction 2-amino-2,3,7-trideoxy-D-lyxo-hept-6-ulosonate + NAD(+) + H2O = 3-dehydroquinate + NH4(+) + NADH + H(+). Functionally, catalyzes the oxidative deamination and cyclization of 2-amino-3,7-dideoxy-D-threo-hept-6-ulosonic acid (ADH) to yield 3-dehydroquinate (DHQ), which is fed into the canonical shikimic pathway of aromatic amino acid biosynthesis. In Methanosarcina acetivorans (strain ATCC 35395 / DSM 2834 / JCM 12185 / C2A), this protein is 3-dehydroquinate synthase.